The sequence spans 514 residues: Cardiolipin synthase 2 (514 aa).

The next 3 membrane-spanning stretches (helical) occupy residues 7 to 27, 41 to 61, and 71 to 91; these read LIFF…FIDV, ILGI…CVIF, and LTWL…YLLF. PLD phosphodiesterase domains lie at 249 to 276 and 427 to 454; these read INYR…GDEY and EKGF…DMRS. Active-site residues include His254, Lys256, Asp261, His432, Lys434, and Asp439.

This sequence belongs to the phospholipase D family. Cardiolipin synthase subfamily.

It localises to the cell membrane. It catalyses the reaction 2 a 1,2-diacyl-sn-glycero-3-phospho-(1'-sn-glycerol) = a cardiolipin + glycerol. Functionally, catalyzes the reversible phosphatidyl group transfer from one phosphatidylglycerol molecule to another to form cardiolipin (CL) (diphosphatidylglycerol) and glycerol. In Bacillus anthracis, this protein is Cardiolipin synthase 2 (cls2).